The primary structure comprises 1383 residues: DNA-directed RNA polymerase subunit beta (1383 aa).

The protein belongs to the RNA polymerase beta chain family. In terms of assembly, the RNAP catalytic core consists of 2 alpha, 1 beta, 1 beta' and 1 omega subunit. When a sigma factor is associated with the core the holoenzyme is formed, which can initiate transcription.

The catalysed reaction is RNA(n) + a ribonucleoside 5'-triphosphate = RNA(n+1) + diphosphate. Its function is as follows. DNA-dependent RNA polymerase catalyzes the transcription of DNA into RNA using the four ribonucleoside triphosphates as substrates. The sequence is that of DNA-directed RNA polymerase subunit beta from Anaplasma phagocytophilum (strain HZ).